Reading from the N-terminus, the 103-residue chain is Large ribosomal subunit protein bL21 (103 aa).

It belongs to the bacterial ribosomal protein bL21 family. In terms of assembly, part of the 50S ribosomal subunit. Contacts protein L20.

Its function is as follows. This protein binds to 23S rRNA in the presence of protein L20. The protein is Large ribosomal subunit protein bL21 of Shewanella pealeana (strain ATCC 700345 / ANG-SQ1).